The chain runs to 3678 residues: Dystrophin (3678 aa).

Residues 1–240 form an actin-binding region; it reads MLWWEEVEDC…YITSLFQVLP (240 aa). 2 Calponin-homology (CH) domains span residues 15-119 and 134-240; these read DVQK…LHWQ and TNSE…QVLP. The tract at residues 63–72 is ANK2- and ANK-3 binding; that stretch reads PKEKGSTRVH. The interval 313–333 is disordered; sequence DSTQSPYPSQHLEAPRDKSLD. Spectrin repeat units follow at residues 341-449, 450-558, 561-669, 721-830, 832-936, 945-1047, 1050-1156, 1159-1265, 1268-1369, 1370-1465, 1470-1570, 1573-1678, 1681-1780, 1781-1876, 1879-1981, 1994-2103, 2106-2210, 2213-2318, 2319-2416, 2468-2570, 2573-2679, 2682-2795, 2801-2923, and 2928-3033; these read VNLD…KLHK, VLMD…VLQD, LKWQ…QISQ, ELRK…WLEY, TNII…ELQT, RYQE…KLEE, NKLR…ALKA, DKTV…TLEE, ACWH…LLEQ, SIQS…LFQK, EQRL…QLEK, KLSR…LLLE, KHME…KASI, PLKE…KALE, HQWY…TLHE, DVSY…RFDR, EKWR…RIEE, NVLS…ELEV, HLKD…LRTK, FNRA…QLNE, KDST…ALEE, RLLQ…HLEA, KRLH…RKID, and RLQE…QLHE. Residues 1417–1915 form an interaction with SYNM region; sequence SDLTSHEISL…PEPRDERKLK (499 aa). The WW domain occupies 3048 to 3081; that stretch reads TSVQGPWERAISPNKVPYYINHETQTTCWDHPKM. The interaction with SYNM stretch occupies residues 3051 to 3401; sequence QGPWERAISP…TVLEGDNMET (351 aa). The ZZ-type; degenerate zinc finger occupies 3301 to 3357; the sequence is KHQAKCNICKECPIIGFRYRSLKHFNYDICQSCFFSGRVAKGHKMHYPMVEYCTPTT. Residues cysteine 3306, cysteine 3309, cysteine 3330, and cysteine 3333 each contribute to the Zn(2+) site. The binds to SNTB1 stretch occupies residues 3459-3511; the sequence is DDEHLLIQHYCQSLNQDSPLSQPRSPAQILISLESEERGELERILADLEEENR. Phosphoserine is present on residues serine 3476, serine 3483, and serine 3493. Disordered regions lie at residues 3521 to 3547 and 3596 to 3678; these read KQQH…QSPR and EAKV…EDTM. Polar residues-rich tracts occupy residues 3600 to 3619 and 3655 to 3665; these read NGTT…SSQP and QLNNSFPSSRG. A phosphoserine mark is found at serine 3605, serine 3606, serine 3610, serine 3616, serine 3617, and serine 3659.

As to quaternary structure, interacts with SYNM. Interacts with the syntrophins SNTG1 and SNTG2. Interacts with KRT19. Component of the dystrophin-associated glycoprotein complex which is composed of three subcomplexes: a cytoplasmic complex comprised of DMD (or UTRN), DTNA and a number of syntrophins, such as SNTB1, SNTB2, SNTG1 and SNTG2, the transmembrane dystroglycan complex, and the sarcoglycan-sarcospan complex. Interacts with DAG1 (betaDAG1) with DMD; the interaction is inhibited by phosphorylation on the PPXY motif of DAG1. Interacts with SYNM; SNTA1 and SNTB1. Interacts with CMYA5. Directly interacts with ANK2 and ANK3; these interactions do not interfere with betaDAG1-binding and are necessary for proper localization in muscle cells. Identified in a dystroglycan complex that contains at least PRX, DRP2, UTRN, DMD and DAG1. Interacts with DTNB. Interacts with PGM5; the interaction is direct. Interacts with NOS1; localizes NOS1 to sarcolemma in muscle cells. In terms of tissue distribution, detected in quadriceps muscle and in sciatic nerve (at protein level). Expressed in the sarcolemma of the soleus muscle (at protein level). Differentially expressed during skeletal muscle, heart, and brain development. Also expressed in retina.

The protein resides in the cell membrane. It is found in the sarcolemma. The protein localises to the cytoplasm. Its subcellular location is the cytoskeleton. It localises to the postsynaptic cell membrane. Functionally, anchors the extracellular matrix to the cytoskeleton via F-actin. Ligand for dystroglycan. Component of the dystrophin-associated glycoprotein complex which accumulates at the neuromuscular junction (NMJ) and at a variety of synapses in the peripheral and central nervous systems and has a structural function in stabilizing the sarcolemma. Also implicated in signaling events and synaptic transmission. The chain is Dystrophin (Dmd) from Mus musculus (Mouse).